The following is a 260-amino-acid chain: MGNIKSFALYISILLLIVVVAGCGKSDKTKEDSKEEQIKKSFAKTLDMYPIKNLEDLYDKEGYRDGEFKKGDKGTWTLLTSFSKSNKPDEIDDEGMVLYLNRNTKKATGYYFVNKIYDDISKNQNEKKYRVELKNNKIVLLDNVEDEKLKQKIENFKFFSQYADFKDLKNYQDGSITTNENIPSYEAEYKLNNSDENVKKLRDIYPITTKKAPILKLHIDGDIKGSSVGYKKIEYKFSKVKDQETTLRDYLNFGPSDEDS.

The N-terminal stretch at 1 to 22 (MGNIKSFALYISILLLIVVVAG) is a signal peptide. A lipid anchor (N-palmitoyl cysteine) is attached at cysteine 23. Residue cysteine 23 is the site of S-diacylglycerol cysteine attachment.

It belongs to the staphylococcal tandem lipoprotein family.

It is found in the cell membrane. This is an uncharacterized protein from Staphylococcus aureus (strain MRSA252).